Consider the following 349-residue polypeptide: Phenylalanine--tRNA ligase alpha subunit (349 aa).

Glu258 contributes to the Mg(2+) binding site.

It belongs to the class-II aminoacyl-tRNA synthetase family. Phe-tRNA synthetase alpha subunit type 1 subfamily. Tetramer of two alpha and two beta subunits. Mg(2+) is required as a cofactor.

It localises to the cytoplasm. The enzyme catalyses tRNA(Phe) + L-phenylalanine + ATP = L-phenylalanyl-tRNA(Phe) + AMP + diphosphate + H(+). In Rickettsia canadensis (strain McKiel), this protein is Phenylalanine--tRNA ligase alpha subunit.